The primary structure comprises 532 residues: Flavin-containing monooxygenase 1 (532 aa).

Ala2 carries the N-acetylalanine modification. The Lumenal segment spans residues 2-510 (AKRVAIVGAG…ARVVQESPSP (509 aa)). Residues 9-13 (GAGVS), Glu32, 40-41 (LW), and 61-62 (NS) contribute to the FAD site. NADP(+) contacts are provided by residues 60-61 (SN) and 195-198 (SGTD). Residues 511 to 531 (FESFLKVFSFLALLVAIFLIF) form a helical membrane-spanning segment. Position 532 (Leu532) is a topological domain, cytoplasmic.

Belongs to the FMO family. The cofactor is FAD. Expressed mainly in fetal and adult liver.

The protein localises to the endoplasmic reticulum membrane. It catalyses the reaction hypotaurine + NADPH + O2 + H(+) = taurine + NADP(+) + H2O. The enzyme catalyses hypotaurine + NADH + O2 + H(+) = taurine + NAD(+) + H2O. The catalysed reaction is trimethylamine + NADPH + O2 = trimethylamine N-oxide + NADP(+) + H2O. It carries out the reaction N,N-dimethylaniline + NADPH + O2 + H(+) = N,N-dimethylaniline N-oxide + NADP(+) + H2O. Broad spectrum monooxygenase that catalyzes the oxygenation of a wide variety of nitrogen- and sulfur-containing compounds including xenobiotics. Catalyzes the S-oxygenation of hypotaurine to produce taurine, an organic osmolyte involved in cell volume regulation as well as a variety of cytoprotective and developmental processes. In vitro, catalyzes the N-oxygenation of trimethylamine (TMA) to produce trimethylamine N-oxide (TMAO) and could therefore participate to the detoxification of this compound that is generated by the action of gut microbiota from dietary precursors such as choline, choline containing compounds, betaine or L-carnitine. The chain is Flavin-containing monooxygenase 1 from Homo sapiens (Human).